A 307-amino-acid polypeptide reads, in one-letter code: Thymidylate synthase (307 aa).

DUMP is bound by residues arginine 26 and 160–161; that span reads RR. The active-site Nucleophile is cysteine 180. Residues 209–212, asparagine 220, and 250–252 each bind dUMP; these read RSCD and HIY. Position 212 (aspartate 212) interacts with (6R)-5,10-methylene-5,6,7,8-tetrahydrofolate. Alanine 306 provides a ligand contact to (6R)-5,10-methylene-5,6,7,8-tetrahydrofolate.

It belongs to the thymidylate synthase family. Bacterial-type ThyA subfamily. As to quaternary structure, homodimer.

The protein localises to the cytoplasm. It carries out the reaction dUMP + (6R)-5,10-methylene-5,6,7,8-tetrahydrofolate = 7,8-dihydrofolate + dTMP. Its pathway is pyrimidine metabolism; dTTP biosynthesis. Catalyzes the reductive methylation of 2'-deoxyuridine-5'-monophosphate (dUMP) to 2'-deoxythymidine-5'-monophosphate (dTMP) while utilizing 5,10-methylenetetrahydrofolate (mTHF) as the methyl donor and reductant in the reaction, yielding dihydrofolate (DHF) as a by-product. This enzymatic reaction provides an intracellular de novo source of dTMP, an essential precursor for DNA biosynthesis. The sequence is that of Thymidylate synthase from Rhizobium rhizogenes (strain K84 / ATCC BAA-868) (Agrobacterium radiobacter).